A 424-amino-acid chain; its full sequence is Serine--tRNA ligase (424 aa).

Position 231 to 233 (231 to 233 (TAE)) interacts with L-serine. Residue 262-264 (RAE) coordinates ATP. L-serine is bound at residue Glu-285. 349–352 (EISS) contributes to the ATP binding site. Ser-385 lines the L-serine pocket.

It belongs to the class-II aminoacyl-tRNA synthetase family. Type-1 seryl-tRNA synthetase subfamily. Homodimer. The tRNA molecule binds across the dimer.

Its subcellular location is the cytoplasm. It catalyses the reaction tRNA(Ser) + L-serine + ATP = L-seryl-tRNA(Ser) + AMP + diphosphate + H(+). The catalysed reaction is tRNA(Sec) + L-serine + ATP = L-seryl-tRNA(Sec) + AMP + diphosphate + H(+). It functions in the pathway aminoacyl-tRNA biosynthesis; selenocysteinyl-tRNA(Sec) biosynthesis; L-seryl-tRNA(Sec) from L-serine and tRNA(Sec): step 1/1. Functionally, catalyzes the attachment of serine to tRNA(Ser). Is also able to aminoacylate tRNA(Sec) with serine, to form the misacylated tRNA L-seryl-tRNA(Sec), which will be further converted into selenocysteinyl-tRNA(Sec). This Geobacillus thermodenitrificans (strain NG80-2) protein is Serine--tRNA ligase.